We begin with the raw amino-acid sequence, 539 residues long: Cytochrome c oxidase subunit 1 homolog (539 aa).

2 helical membrane passes run 28–48 (LFAA…LLLL) and 75–95 (GVMA…VVAL). A heme b-binding site is contributed by H117. Helical transmembrane passes span 118 to 138 (TSAV…FYVV), 154 to 174 (FVFW…LLGI), 187 to 207 (VDLW…GTIL), 214 to 234 (ISVA…LHIV), 265 to 285 (GHNA…YYFI), 298 to 318 (LSII…PHHL), 330 to 350 (LGMV…INGL), 368 to 388 (MMVM…MMSI), 402 to 422 (IGHV…GAIY), 443 to 463 (HFWL…VAGI), and 498 to 518 (LGGL…TMTI). Cu cation is bound by residues H266, H316, and H317. The heme b site is built by H404 and H406.

Belongs to the heme-copper respiratory oxidase family. It depends on Cu(2+) as a cofactor. Requires heme b as cofactor.

Its subcellular location is the cell membrane. It catalyses the reaction 4 Fe(II)-[cytochrome c] + O2 + 8 H(+)(in) = 4 Fe(III)-[cytochrome c] + 2 H2O + 4 H(+)(out). It participates in energy metabolism; oxidative phosphorylation. Its function is as follows. Cytochrome c oxidase is the component of the respiratory chain that catalyzes the reduction of oxygen to water. Subunits 1-3 form the functional core of the enzyme complex. Co I is the catalytic subunit of the enzyme. Electrons originating in cytochrome c or a quinol are transferred to the bimetallic center formed by a high-spin heme and copper B. The polypeptide is Cytochrome c oxidase subunit 1 homolog (fixN) (Agrobacterium tumefaciens (strain T37)).